Consider the following 842-residue polypeptide: MANILRTVIENDKGELKKLDKIAKKVDSYADHMAALSDEALQAKTPEFKERYQNGETLDQLLPEAFAVVREASKRVLGLYPYHVQIMGGIVLHHGDIPEMRTGEGKTLTATMPVYLNAISGLGVHVITVNEYLSTRDATEMGEVYSWLGLSVGINLAAKSPFEKREAYNCDITYSTNAEVGFDYLRDNMVVRQEDMVQRPLNYALVDEVDSVLIDEARTPLIVSGPVSSEMNQLYTRADMFVKTLNSDDYIIDVPTKTIGLSDTGIDKAENYFHLNNLYDLENVALTHYIDNALRANYIMLLNIDYVVSEEQEILIVDQFTGRTMEGRRFSDGLHQAIEAKESVPIQEESKTSASITYQNMFRMYHKLAGMTGTGKTEEEEFREIYNMRVIPIPTNRPVQRIDHSDLLYPTLDSKFRAVVADVKERYEQGQPVLVGTVAVETSDLISRKLVAAGVPHEVLNAKNHFKEAQIIMNAGQRGAVTIATNMAGRGTDIKLGEGVRELGGLCVIGTERHESRRIDNQLRGRSGRQGDPGESQFYLSLEDDLMRRFGTDRIKVVLERMNLAEDDTVIKSKMLTRQVESAQRRVEGNNYDTRKQVLQYDDVMREQREIIYANRREVITAERDLGPELKGMIKRTIKRAVDAHSRSDKNTAAEAIVNFARSALLDEEAITVSELRGLKEAEIKELLYERALAVYEQQIAKLKDPEAIIEFQKVLILMVVDNQWTEHIDALDQLRNSVGLRGYAQNNPIVEYQSEGFRMFQDMIGSIEFDVTRTLMKAQIHEQERERASQHATTTAEQNISAQHVPMNNESPEYQGIKRNDKCPCGSGMKFKNCHGLRCLQ.

ATP contacts are provided by residues glutamine 85, 103 to 107, and aspartate 493; that span reads GEGKT. Positions 824, 826, 835, and 836 each coordinate Zn(2+).

Belongs to the SecA family. In terms of assembly, monomer and homodimer. Part of the essential Sec protein translocation apparatus which comprises SecA, SecYEG and auxiliary proteins SecDF. Other proteins may also be involved. Zn(2+) is required as a cofactor.

It localises to the cell membrane. The protein resides in the cytoplasm. The enzyme catalyses ATP + H2O + cellular proteinSide 1 = ADP + phosphate + cellular proteinSide 2.. Functionally, part of the Sec protein translocase complex. Interacts with the SecYEG preprotein conducting channel. Has a central role in coupling the hydrolysis of ATP to the transfer of proteins into and across the cell membrane, serving as an ATP-driven molecular motor driving the stepwise translocation of polypeptide chains across the membrane. The sequence is that of Protein translocase subunit SecA 1 from Streptococcus agalactiae serotype Ia (strain ATCC 27591 / A909 / CDC SS700).